The following is a 352-amino-acid chain: Anthranilate phosphoribosyltransferase (352 aa).

5-phospho-alpha-D-ribose 1-diphosphate is bound by residues Gly-94, 97 to 98, Ser-102, 104 to 107, 122 to 130, and Ser-134; these read GS, NIST, and KHGNRAVSS. Gly-94 provides a ligand contact to anthranilate. Mg(2+) is bound at residue Ser-106. Asn-125 contacts anthranilate. Arg-180 lines the anthranilate pocket. Mg(2+)-binding residues include Asp-239 and Glu-240.

This sequence belongs to the anthranilate phosphoribosyltransferase family. In terms of assembly, homodimer. It depends on Mg(2+) as a cofactor.

The catalysed reaction is N-(5-phospho-beta-D-ribosyl)anthranilate + diphosphate = 5-phospho-alpha-D-ribose 1-diphosphate + anthranilate. It participates in amino-acid biosynthesis; L-tryptophan biosynthesis; L-tryptophan from chorismate: step 2/5. Its function is as follows. Catalyzes the transfer of the phosphoribosyl group of 5-phosphorylribose-1-pyrophosphate (PRPP) to anthranilate to yield N-(5'-phosphoribosyl)-anthranilate (PRA). The chain is Anthranilate phosphoribosyltransferase from Geobacter sp. (strain M21).